Reading from the N-terminus, the 63-residue chain is Sperm protamine P1 (63 aa).

The tract at residues 1 to 63 (MARYRRHSRS…RYSRRGRRRY (63 aa)) is disordered.

The protein belongs to the protamine P1 family. As to expression, testis.

The protein localises to the nucleus. It localises to the chromosome. Functionally, protamines substitute for histones in the chromatin of sperm during the haploid phase of spermatogenesis. They compact sperm DNA into a highly condensed, stable and inactive complex. This is Sperm protamine P1 (PRM1) from Sminthopsis griseoventer (Gray-bellied dunnart).